We begin with the raw amino-acid sequence, 368 residues long: WAT1-related protein At5g40240 (368 aa).

Helical transmembrane passes span 18–38 (VVPFAAMFAVECATVGSNTLF), 50–70 (VFVFYSYIVSTLLLLPLSVIF), 82–102 (PLFFKIFLLGLVGFMSQIAGC), 111–131 (TLASAISNLTPAFTFTLAVIF), 142–162 (ATQAKIIGAILSISGALVVVL), 194–214 (WIIGGLLLASQYFLISVWYIL), 226–246 (ITVVFFYNLFATLISVPVCLF), 260–280 (ISLAAIIYSGVFVSLFSALTH), 292–312 (ISLFRPLSIAIAVAMGAIFLG), and 315–335 (LHLGSVIGSMILCIGFYTVIW). EamA domains are found at residues 33 to 161 (GSNT…LVVV) and 208 to 334 (ISVW…YTVI).

The protein belongs to the drug/metabolite transporter (DMT) superfamily. Plant drug/metabolite exporter (P-DME) (TC 2.A.7.4) family.

Its subcellular location is the membrane. This chain is WAT1-related protein At5g40240, found in Arabidopsis thaliana (Mouse-ear cress).